The sequence spans 481 residues: MAENTDRNQIEKLLNRVKELEQEVERLKKKKEQANNIKDSSIRENSLGSGKAKRAFDFSAHGRRHVALKIAYLGWGYQGFASQENTSNTIEEKLFEALTKTRLVESRQTSNYHRCGRTDKGVSAFGQVISLDLRSQFPTSRDSEDSNLKHEADDLAKEIRYTHILNRVLPADIRVLAWAPVEPSFSARFSCLERTYRYFFPRADLDIATMNYAAQKYVGTHDFRNLCKMDVANGVINFQRTILCAQVQLVAQSPGEERRQEPFQLCQFEVIGQAFLYHQVRCMMAILFLIGQGMEKPEIIDELLNIQKNPQKPQYSMAVEFPLVLYDCKFENTKWIYDHEVQEFNVTHLQQLWANHAVKTHMLYSMLQGLDSVMVTCAAGTKMDEATEWRNIQPPVIKHTSAFVEGVKMRTYKPLMDRPKCQGLESRIRHFVSRGRIEHPHLLHKEEIKARRDCADKEENTVVENPSKRVCIIDAEINSIA.

Ala-2 carries the post-translational modification N-acetylalanine. Catalysis depends on Asp-119, which acts as the Nucleophile. Residue Tyr-196 participates in substrate binding.

It belongs to the tRNA pseudouridine synthase TruA family.

The protein localises to the nucleus. The catalysed reaction is uridine(38/39) in tRNA = pseudouridine(38/39) in tRNA. Functionally, formation of pseudouridine at position 39 in the anticodon stem and loop of transfer RNAs. Also acts on position 38, but much less efficiently. The sequence is that of tRNA pseudouridine(38/39) synthase (Pus3) from Mus musculus (Mouse).